Consider the following 541-residue polypeptide: Chaperonin GroEL (541 aa).

Residues 29-32 (TLGP), 86-90 (DGTTT), Gly413, 477-479 (DAL), and Asp493 contribute to the ATP site.

It belongs to the chaperonin (HSP60) family. In terms of assembly, forms a cylinder of 14 subunits composed of two heptameric rings stacked back-to-back. Interacts with the co-chaperonin GroES.

Its subcellular location is the cytoplasm. It carries out the reaction ATP + H2O + a folded polypeptide = ADP + phosphate + an unfolded polypeptide.. Together with its co-chaperonin GroES, plays an essential role in assisting protein folding. The GroEL-GroES system forms a nano-cage that allows encapsulation of the non-native substrate proteins and provides a physical environment optimized to promote and accelerate protein folding. This Clostridium beijerinckii (strain ATCC 51743 / NCIMB 8052) (Clostridium acetobutylicum) protein is Chaperonin GroEL.